Consider the following 525-residue polypeptide: Glutamate--cysteine ligase (525 aa).

Belongs to the glutamate--cysteine ligase type 1 family. Type 1 subfamily.

It carries out the reaction L-cysteine + L-glutamate + ATP = gamma-L-glutamyl-L-cysteine + ADP + phosphate + H(+). It functions in the pathway sulfur metabolism; glutathione biosynthesis; glutathione from L-cysteine and L-glutamate: step 1/2. The polypeptide is Glutamate--cysteine ligase (Vibrio vulnificus (strain CMCP6)).